A 100-amino-acid polypeptide reads, in one-letter code: Large ribosomal subunit protein uL23 (100 aa).

Belongs to the universal ribosomal protein uL23 family. As to quaternary structure, part of the 50S ribosomal subunit. Contacts protein L29, and trigger factor when it is bound to the ribosome.

In terms of biological role, one of the early assembly proteins it binds 23S rRNA. One of the proteins that surrounds the polypeptide exit tunnel on the outside of the ribosome. Forms the main docking site for trigger factor binding to the ribosome. This Aliivibrio fischeri (strain MJ11) (Vibrio fischeri) protein is Large ribosomal subunit protein uL23.